A 313-amino-acid chain; its full sequence is NADH-ubiquinone oxidoreductase chain 1 (313 aa).

10 helical membrane-spanning segments follow: residues 6 to 26 (IIII…FVSL), 31 to 51 (ILAL…ILTP), 62 to 82 (FIIF…IITA), 84 to 104 (CIFL…DTGF), 109 to 129 (MLCV…CFLF), 142 to 162 (MFFS…IYSL), 183 to 203 (FYIA…LDGL), 216 to 235 (LVAG…YSVL), 250 to 270 (LCFG…FGFF), and 286 to 306 (AFIL…LFTT).

It belongs to the complex I subunit 1 family.

The protein localises to the mitochondrion inner membrane. It catalyses the reaction a ubiquinone + NADH + 5 H(+)(in) = a ubiquinol + NAD(+) + 4 H(+)(out). Core subunit of the mitochondrial membrane respiratory chain NADH dehydrogenase (Complex I) that is believed to belong to the minimal assembly required for catalysis. Complex I functions in the transfer of electrons from NADH to the respiratory chain. The immediate electron acceptor for the enzyme is believed to be ubiquinone. This Leishmania tarentolae (Sauroleishmania tarentolae) protein is NADH-ubiquinone oxidoreductase chain 1 (ND1).